The primary structure comprises 102 residues: Large ribosomal subunit protein uL24 (102 aa).

Belongs to the universal ribosomal protein uL24 family. Part of the 50S ribosomal subunit.

Functionally, one of two assembly initiator proteins, it binds directly to the 5'-end of the 23S rRNA, where it nucleates assembly of the 50S subunit. In terms of biological role, one of the proteins that surrounds the polypeptide exit tunnel on the outside of the subunit. The sequence is that of Large ribosomal subunit protein uL24 from Lysinibacillus sphaericus (strain C3-41).